We begin with the raw amino-acid sequence, 519 residues long: 2-isopropylmalate synthase (519 aa).

The 263-residue stretch at 12 to 274 (VVIFDTTLRD…WCNVESTTLT (263 aa)) folds into the Pyruvate carboxyltransferase domain. The Mn(2+) site is built by aspartate 21, histidine 209, histidine 211, and asparagine 245. Positions 398 to 519 (RLVSLTVIAG…QREAPVAAAS (122 aa)) are regulatory domain.

The protein belongs to the alpha-IPM synthase/homocitrate synthase family. LeuA type 1 subfamily. In terms of assembly, homodimer. It depends on Mn(2+) as a cofactor.

Its subcellular location is the cytoplasm. The catalysed reaction is 3-methyl-2-oxobutanoate + acetyl-CoA + H2O = (2S)-2-isopropylmalate + CoA + H(+). It participates in amino-acid biosynthesis; L-leucine biosynthesis; L-leucine from 3-methyl-2-oxobutanoate: step 1/4. Functionally, catalyzes the condensation of the acetyl group of acetyl-CoA with 3-methyl-2-oxobutanoate (2-ketoisovalerate) to form 3-carboxy-3-hydroxy-4-methylpentanoate (2-isopropylmalate). The protein is 2-isopropylmalate synthase of Afipia carboxidovorans (strain ATCC 49405 / DSM 1227 / KCTC 32145 / OM5) (Oligotropha carboxidovorans).